A 155-amino-acid chain; its full sequence is Phosphopantetheine adenylyltransferase (155 aa).

Belongs to the eukaryotic CoaD family.

It localises to the cytoplasm. It catalyses the reaction (R)-4'-phosphopantetheine + ATP + H(+) = 3'-dephospho-CoA + diphosphate. It participates in cofactor biosynthesis; coenzyme A biosynthesis. Reversibly transfers an adenylyl group from ATP to 4'-phosphopantetheine, yielding dephospho-CoA (dPCoA) and pyrophosphate. In Pyrobaculum aerophilum (strain ATCC 51768 / DSM 7523 / JCM 9630 / CIP 104966 / NBRC 100827 / IM2), this protein is Phosphopantetheine adenylyltransferase.